The sequence spans 59 residues: UPF0509 protein YciZ (59 aa).

This sequence belongs to the UPF0509 family.

This chain is UPF0509 protein YciZ, found in Salmonella agona (strain SL483).